A 531-amino-acid chain; its full sequence is Zinc finger protein 837 (531 aa).

Positions 1 to 101 (MEAPAQKAGQ…CGPTSSQNPE (101 aa)) are disordered. Over residues 24-50 (AREKRPEEPRPLEEDRAGSRPTQKGDL) the composition is skewed to basic and acidic residues. 8 C2H2-type zinc fingers span residues 271–293 (YACD…QRIH), 299–321 (YECA…QKTH), 363–385 (YECA…RRVH), 391–413 (YACP…QRTH), 419–441 (YACP…QRAH), 447–469 (YGCS…ERLH), 475–497 (YICR…LRTH), and 503–525 (YACG…RKRH).

The protein belongs to the krueppel C2H2-type zinc-finger protein family.

The protein localises to the nucleus. In terms of biological role, may be involved in transcriptional regulation. The sequence is that of Zinc finger protein 837 (ZNF837) from Homo sapiens (Human).